The sequence spans 341 residues: MAP3K12-binding inhibitory protein 1 (341 aa).

Serine 91 is modified (phosphoserine). Glycyl lysine isopeptide (Lys-Gly) (interchain with G-Cter in SUMO2) cross-links involve residues lysine 94, lysine 127, lysine 137, lysine 151, and lysine 233. The segment at 170–341 is interaction with MAP3K12; sequence AEINENNVRE…EADSMAAHLP (172 aa). The interval 269–283 is leucine-zipper 1; sequence IYQRIKKLEDKILEL. An N6-acetyllysine; alternate modification is found at lysine 299. Lysine 299 is covalently cross-linked (Glycyl lysine isopeptide (Lys-Gly) (interchain with G-Cter in SUMO2); alternate). Residues lysine 302 and lysine 323 each participate in a glycyl lysine isopeptide (Lys-Gly) (interchain with G-Cter in SUMO2) cross-link. The tract at residues 312–327 is leucine-zipper 2; sequence LAELDEKISALKRALL.

As to quaternary structure, component of the ADA2A-containing complex (ATAC), composed of KAT14, KAT2A, TADA2L, TADA3L, ZZ3, MBIP, WDR5, YEATS2, CCDC101 and DR1. In the complex, it probably interacts directly with KAT2A, KAT14 and WDR5.

The protein resides in the nucleus. The protein localises to the cytoplasm. Its function is as follows. Inhibits the MAP3K12 activity to induce the activation of the JNK/SAPK pathway. Component of the ATAC complex, a complex with histone acetyltransferase activity on histones H3 and H4. The protein is MAP3K12-binding inhibitory protein 1 (Mbip) of Mus musculus (Mouse).